Here is a 430-residue protein sequence, read N- to C-terminus: MSFTTRSTFSTNYRSLGSVQAPSYGARPVSSAASVYAGAGGSGSRISVSRSTSFRGGMGSGGLATGIAGGLAGMGGIQNEKETMQSLNDRLASYLDRVRSLETENRRLESKIREHLEKKGPQVRDWSHYFKIIEDLRAQIFANTVDNARIVLQIDNARLAADDFRVKYETELAMRQSVENDIHGLRKVIDDTNITRLQLETEIEALKEELLFMKKNHEEEVKGLQAQIASSGLTVEVDAPKSQDLAKIMADIRAQYDELARKNREELDKYWSQQIEESTTVVTTQSAEVGAAETTLTELRRTVQSLEIDLDSMRNLKASLENSLREVEARYALQMEQLNGILLHLESELAQTRAEGQRQAQEYEALLNIKVKLEAEIATYRRLLEDGEDFNLGDALDSSNSMQTIQKTTTRRIVDGKVVSETNDTKVLRH.

Position 2 is an N-acetylserine (Ser2). The head stretch occupies residues 2-79 (SFTTRSTFST…GLAGMGGIQN (78 aa)). Phosphoserine is present on residues Ser7, Ser10, Ser15, and Ser18. 2 positions are modified to phosphoserine; alternate: Ser30 and Ser31. O-linked (GlcNAc) serine; alternate glycans are attached at residues Ser30 and Ser31. Ser34 carries the phosphoserine; by CDK1 modification. Tyr36 is subject to Phosphotyrosine. The residue at position 42 (Ser42) is a Phosphoserine. Arg45 is subject to Omega-N-methylarginine. Ser49 is modified (phosphoserine; alternate). Residue Ser49 is glycosylated (O-linked (GlcNAc) serine; alternate). Residue Ser51 is modified to Phosphoserine; by MAPKAPK2 and MAPKAPK3. Phosphothreonine is present on Thr52. Ser53 carries the post-translational modification Phosphoserine; by CAMK, PKC/PRKCE and AURKA. At Arg55 the chain carries Omega-N-methylarginine. Phosphoserine is present on Ser60. Thr65 is subject to Phosphothreonine. Residues 70–373 (GLAGMGGIQN…EALLNIKVKL (304 aa)) form a necessary for interaction with PNN region. Residues 77–128 (IQNEKETMQSLNDRLASYLDRVRSLETENRRLESKIREHLEKKGPQVRDWSH) form an interaction with TRADD region. The coil 1A stretch occupies residues 80–115 (EKETMQSLNDRLASYLDRVRSLETENRRLESKIREH). Residues 80–391 (EKETMQSLND…RLLEDGEDFN (312 aa)) enclose the IF rod domain. A Glycyl lysine isopeptide (Lys-Gly) (interchain with G-Cter in SUMO2) cross-link involves residue Lys81. Ser93 and Ser100 each carry phosphoserine. The segment at 116-132 (LEKKGPQVRDWSHYFKI) is linker 1. N6-acetyllysine is present on Lys131. Positions 133–224 (IEDLRAQIFA…KNHEEEVKGL (92 aa)) are coil 1B. Phosphoserine is present on Ser177. Residues 225–248 (QAQIASSGLTVEVDAPKSQDLAKI) are linker 12. The interaction with DNAJB6 stretch occupies residues 243–391 (QDLAKIMADI…RLLEDGEDFN (149 aa)). Lys247 is covalently cross-linked (Glycyl lysine isopeptide (Lys-Gly) (interchain with G-Cter in SUMO2)). The coil 2 stretch occupies residues 249–387 (MADIRAQYDE…ATYRRLLEDG (139 aa)). Residue Thr302 is modified to Phosphothreonine. Residues Ser305, Ser319, and Ser323 each carry the phosphoserine modification. Glycyl lysine isopeptide (Lys-Gly) (interchain with G-Cter in SUMO2) cross-links involve residues Lys370 and Lys372. The tail stretch occupies residues 388–430 (EDFNLGDALDSSNSMQTIQKTTTRRIVDGKVVSETNDTKVLRH). 3 positions are modified to phosphoserine: Ser398, Ser399, and Ser401. At Thr404 the chain carries Phosphothreonine. Lys417 is covalently cross-linked (Glycyl lysine isopeptide (Lys-Gly) (interchain with G-Cter in SUMO2)). Lys426 is subject to N6-acetyllysine; alternate. Lys426 is covalently cross-linked (Glycyl lysine isopeptide (Lys-Gly) (interchain with G-Cter in SUMO1); alternate). A Glycyl lysine isopeptide (Lys-Gly) (interchain with G-Cter in SUMO2); alternate cross-link involves residue Lys426.

The protein belongs to the intermediate filament family. As to quaternary structure, heterotetramer of two type I and two type II keratins. KRT18 associates with KRT8. Interacts with PLEC isoform 1C, when in a heterodimer with KRT8. Interacts with the thrombin-antithrombin complex. Interacts with PNN and mutated CFTR. Interacts with YWHAE, YWHAH and YWHAZ only when phosphorylated. Interacts with DNAJB6, TCHP and TRADD. Interacts with FAM83H. Interacts with EPPK1. Interacts with PKP1 and PKP2. In terms of assembly, (Microbial infection) Interacts with hepatitis C virus/HCV core protein. In terms of processing, phosphorylation at Ser-34 increases during mitosis. Hyperphosphorylated at Ser-53 in diseased cirrhosis liver. Phosphorylation increases by IL-6. Post-translationally, proteolytically cleaved by caspases during epithelial cell apoptosis. Cleavage occurs at Asp-238 by either caspase-3, caspase-6 or caspase-7. O-GlcNAcylation increases solubility, and decreases stability by inducing proteasomal degradation. As to expression, expressed in colon, placenta, liver and very weakly in exocervix. Increased expression observed in lymph nodes of breast carcinoma.

Its subcellular location is the nucleus matrix. The protein resides in the cytoplasm. The protein localises to the perinuclear region. It localises to the nucleus. It is found in the nucleolus. Functionally, involved in the uptake of thrombin-antithrombin complexes by hepatic cells. When phosphorylated, plays a role in filament reorganization. Involved in the delivery of mutated CFTR to the plasma membrane. Together with KRT8, is involved in interleukin-6 (IL-6)-mediated barrier protection. In Homo sapiens (Human), this protein is Keratin, type I cytoskeletal 18 (KRT18).